A 158-amino-acid polypeptide reads, in one-letter code: Transcription elongation factor GreA (158 aa).

A coiled-coil region spans residues 47-74 (NSEYDEAKNEQAFTEGRIIQLENMLKNA).

It belongs to the GreA/GreB family.

Necessary for efficient RNA polymerase transcription elongation past template-encoded arresting sites. The arresting sites in DNA have the property of trapping a certain fraction of elongating RNA polymerases that pass through, resulting in locked ternary complexes. Cleavage of the nascent transcript by cleavage factors such as GreA or GreB allows the resumption of elongation from the new 3'terminus. GreA releases sequences of 2 to 3 nucleotides. The polypeptide is Transcription elongation factor GreA (Clostridium perfringens (strain ATCC 13124 / DSM 756 / JCM 1290 / NCIMB 6125 / NCTC 8237 / Type A)).